Consider the following 91-residue polypeptide: uncharacterized protein (91 aa).

It localises to the plastid. The protein localises to the chloroplast. This is an uncharacterized protein from Phalaenopsis aphrodite subsp. formosana (Moth orchid).